The primary structure comprises 464 residues: Glutamate--tRNA ligase (464 aa).

The short motif at 9-19 is the 'HIGH' region element; the sequence is PSPTGYLHIGG. Positions 242–246 match the 'KMSKS' region motif; it reads KISKR. K245 is an ATP binding site.

This sequence belongs to the class-I aminoacyl-tRNA synthetase family. Glutamate--tRNA ligase type 1 subfamily. As to quaternary structure, monomer.

Its subcellular location is the cytoplasm. The enzyme catalyses tRNA(Glu) + L-glutamate + ATP = L-glutamyl-tRNA(Glu) + AMP + diphosphate. In terms of biological role, catalyzes the attachment of glutamate to tRNA(Glu) in a two-step reaction: glutamate is first activated by ATP to form Glu-AMP and then transferred to the acceptor end of tRNA(Glu). This chain is Glutamate--tRNA ligase, found in Neisseria meningitidis serogroup B (strain ATCC BAA-335 / MC58).